The chain runs to 436 residues: Chorion-specific transcription factor GCMa (436 aa).

The GCM DNA-binding region spans Leu14–Met169. Cys76, Cys82, Cys86, Cys113, Cys116, Cys125, His152, and His154 together coordinate Zn(2+).

In terms of processing, polyubiquitinated in the presence of UBE2D2 and FBXW2 (in vitro).

It is found in the nucleus. Functionally, transcription factor involved in the control of expression of placental growth factor (PGF) and other placenta-specific genes. Binds to the trophoblast-specific element 2 (TSE2) of the aromatase gene enhancer. Binds to the SYDE1 promoter. Has a central role in mediating the differentiation of trophoblast cells along both the villous and extravillous pathways in placental development. In Rattus norvegicus (Rat), this protein is Chorion-specific transcription factor GCMa (Gcm1).